The sequence spans 127 residues: Oleate-induced peroxisomal protein POX18 (127 aa).

Positions 14–119 (FKELHEGLAD…KATAIESVFK (106 aa)) constitute an SCP2 domain. Residues 33–41 (AVNAVIVIT) are hydrophobic. Residues 43-52 (KNKEGKEQSW) form a hydrophilic region.

Monomer.

Its subcellular location is the peroxisome. The protein operates within lipid metabolism; fatty acid metabolism. Its function is as follows. Is involved in beta-oxidation of long-chain fatty acids. Its exact function is unknown, but possesses a nonspecific lipid-transfer activity, despite the absence of a cysteine residue thought to be essential for the activity of its mammalian counterparts. The sequence is that of Oleate-induced peroxisomal protein POX18 (POX18) from Candida maltosa (Yeast).